The sequence spans 303 residues: Large ribosomal subunit protein uL18 (303 aa).

This sequence belongs to the universal ribosomal protein uL18 family. As to quaternary structure, component of the large ribosomal subunit (LSU).

It localises to the cytoplasm. The protein localises to the nucleus. Component of the ribosome, a large ribonucleoprotein complex responsible for the synthesis of proteins in the cell. The small ribosomal subunit (SSU) binds messenger RNAs (mRNAs) and translates the encoded message by selecting cognate aminoacyl-transfer RNA (tRNA) molecules. The large subunit (LSU) contains the ribosomal catalytic site termed the peptidyl transferase center (PTC), which catalyzes the formation of peptide bonds, thereby polymerizing the amino acids delivered by tRNAs into a polypeptide chain. The nascent polypeptides leave the ribosome through a tunnel in the LSU and interact with protein factors that function in enzymatic processing, targeting, and the membrane insertion of nascent chains at the exit of the ribosomal tunnel. The chain is Large ribosomal subunit protein uL18 (RPL5) from Oikopleura dioica (Tunicate).